A 198-amino-acid chain; its full sequence is ATP synthase subunit delta (198 aa).

It belongs to the ATPase delta chain family. As to quaternary structure, F-type ATPases have 2 components, F(1) - the catalytic core - and F(0) - the membrane proton channel. F(1) has five subunits: alpha(3), beta(3), gamma(1), delta(1), epsilon(1). F(0) has three main subunits: a(1), b(2) and c(10-14). The alpha and beta chains form an alternating ring which encloses part of the gamma chain. F(1) is attached to F(0) by a central stalk formed by the gamma and epsilon chains, while a peripheral stalk is formed by the delta and b chains.

Its subcellular location is the cell inner membrane. Functionally, f(1)F(0) ATP synthase produces ATP from ADP in the presence of a proton or sodium gradient. F-type ATPases consist of two structural domains, F(1) containing the extramembraneous catalytic core and F(0) containing the membrane proton channel, linked together by a central stalk and a peripheral stalk. During catalysis, ATP synthesis in the catalytic domain of F(1) is coupled via a rotary mechanism of the central stalk subunits to proton translocation. This protein is part of the stalk that links CF(0) to CF(1). It either transmits conformational changes from CF(0) to CF(1) or is implicated in proton conduction. This chain is ATP synthase subunit delta, found in Gluconacetobacter diazotrophicus (strain ATCC 49037 / DSM 5601 / CCUG 37298 / CIP 103539 / LMG 7603 / PAl5).